The sequence spans 184 residues: GMP synthase [glutamine-hydrolyzing] subunit A (184 aa).

One can recognise a Glutamine amidotransferase type-1 domain in the interval 3-184; it reads RIVVVDNHGQ…ENFRDICAGD (182 aa). Cys-73 (nucleophile) is an active-site residue. Active-site residues include His-161 and Glu-163.

Heterodimer composed of a glutamine amidotransferase subunit (A) and a GMP-binding subunit (B).

It catalyses the reaction XMP + L-glutamine + ATP + H2O = GMP + L-glutamate + AMP + diphosphate + 2 H(+). It participates in purine metabolism; GMP biosynthesis; GMP from XMP (L-Gln route): step 1/1. Functionally, catalyzes the synthesis of GMP from XMP. This is GMP synthase [glutamine-hydrolyzing] subunit A from Natronomonas pharaonis (strain ATCC 35678 / DSM 2160 / CIP 103997 / JCM 8858 / NBRC 14720 / NCIMB 2260 / Gabara) (Halobacterium pharaonis).